The chain runs to 185 residues: Large ribosomal subunit protein uL5m (185 aa).

Belongs to the universal ribosomal protein uL5 family. In terms of assembly, component of the mitochondrial ribosome large subunit.

It is found in the mitochondrion. The polypeptide is Large ribosomal subunit protein uL5m (RPL5) (Arabidopsis thaliana (Mouse-ear cress)).